The sequence spans 398 residues: MNIHEYQAKALLKSYGAPVAEGVAIFSADEAAAAAKKLPGPLYVVKSQIHAGGRGKGKFKELGADAKGGVRLAKSADEVVAHAREMLGNTLVTKQTGPSGKQVNRLYIEDGADIDRELYLSILVDRSVGQVAFVVSTEGGMDIEAVAEHTPEKIVTVAIDPDKGVTADDLKTLTEALKLDGEARADAEKLFPILYKAFVEKDMSLLEVNPLIVMTNGRMRVLDAKVSFDGNALFRHEDVVALRDTTEEDEKEIEASKYDLAYVALDGNIGCMVNGAGLAMATMDIIKLYGAEPANFLDVGGGASKEKVTQAFKIITADPAVKGILVNIFGGIMKCDVIAEGVIAAVKEVGLKVPLVVRLEGTNVELGKKIINESGLNVISADDLDDAAQKIVAAVKGA.

An ATP-grasp domain is found at 9–254 (KALLKSYGAP…TTEEDEKEIE (246 aa)). Residues Lys46, 53 to 55 (GRG), Glu109, Ala112, and Glu117 contribute to the ATP site. Mg(2+)-binding residues include Asn209 and Asp223. Residues Asn274 and 331 to 333 (GIM) contribute to the substrate site.

The protein belongs to the succinate/malate CoA ligase beta subunit family. In terms of assembly, heterotetramer of two alpha and two beta subunits. Requires Mg(2+) as cofactor.

It carries out the reaction succinate + ATP + CoA = succinyl-CoA + ADP + phosphate. The catalysed reaction is GTP + succinate + CoA = succinyl-CoA + GDP + phosphate. The protein operates within carbohydrate metabolism; tricarboxylic acid cycle; succinate from succinyl-CoA (ligase route): step 1/1. Succinyl-CoA synthetase functions in the citric acid cycle (TCA), coupling the hydrolysis of succinyl-CoA to the synthesis of either ATP or GTP and thus represents the only step of substrate-level phosphorylation in the TCA. The beta subunit provides nucleotide specificity of the enzyme and binds the substrate succinate, while the binding sites for coenzyme A and phosphate are found in the alpha subunit. The protein is Succinate--CoA ligase [ADP-forming] subunit beta of Sinorhizobium medicae (strain WSM419) (Ensifer medicae).